Here is a 640-residue protein sequence, read N- to C-terminus: 1,4-alpha-glucan branching enzyme GlgB (640 aa).

D318 (nucleophile) is an active-site residue. Catalysis depends on E371, which acts as the Proton donor.

This sequence belongs to the glycosyl hydrolase 13 family. GlgB subfamily. In terms of assembly, monomer.

The enzyme catalyses Transfers a segment of a (1-&gt;4)-alpha-D-glucan chain to a primary hydroxy group in a similar glucan chain.. It functions in the pathway glycan biosynthesis; glycogen biosynthesis. Functionally, catalyzes the formation of the alpha-1,6-glucosidic linkages in glycogen by scission of a 1,4-alpha-linked oligosaccharide from growing alpha-1,4-glucan chains and the subsequent attachment of the oligosaccharide to the alpha-1,6 position. The protein is 1,4-alpha-glucan branching enzyme GlgB of Francisella tularensis subsp. holarctica (strain FTNF002-00 / FTA).